A 1290-amino-acid polypeptide reads, in one-letter code: DNA-directed RNA polymerase subunit beta' (1290 aa).

Residues cysteine 68, cysteine 70, cysteine 83, and cysteine 86 each contribute to the Zn(2+) site. Aspartate 530, aspartate 532, and aspartate 534 together coordinate Mg(2+). Zn(2+) is bound by residues cysteine 909, cysteine 985, cysteine 992, and cysteine 995.

The protein belongs to the RNA polymerase beta' chain family. In terms of assembly, the RNAP catalytic core consists of 2 alpha, 1 beta, 1 beta' and 1 omega subunit. When a sigma factor is associated with the core the holoenzyme is formed, which can initiate transcription. Mg(2+) is required as a cofactor. It depends on Zn(2+) as a cofactor.

The catalysed reaction is RNA(n) + a ribonucleoside 5'-triphosphate = RNA(n+1) + diphosphate. Its function is as follows. DNA-dependent RNA polymerase catalyzes the transcription of DNA into RNA using the four ribonucleoside triphosphates as substrates. This chain is DNA-directed RNA polymerase subunit beta', found in Mycoplasma pneumoniae (strain ATCC 29342 / M129 / Subtype 1) (Mycoplasmoides pneumoniae).